A 166-amino-acid polypeptide reads, in one-letter code: DNA replication protein 17 (166 aa).

Belongs to the phi29likevirus protein p56 family. In terms of assembly, homodimer. Interacts with the histone-like protein p6; this interaction optimizes the binding of protein p6 at the viral DNA ends, thus favoring the initiation of replication.

Involved in the replication of viral DNA. It is required at the very beginning of the virus amplification, conditions in which a low number of viral DNA molecules enter the host cell, possibly to recruit the limiting amount of initiation factors at the replication origins. Once the infection process is established and the other replication proteins reach optimal concentration, it becomes dispensable. Optimizes the binding of protein p6 at the viral DNA ends, thus favoring the initiation of replication. In Bacillus subtilis (Bacteriophage phi-29), this protein is DNA replication protein 17 (17).